The sequence spans 669 residues: DNA mismatch repair protein MutL (669 aa).

The interval 356–382 (FEQRQNTENNQEKTFSSEESNSKPFME) is disordered. Over residues 361-378 (NTENNQEKTFSSEESNSK) the composition is skewed to polar residues.

The protein belongs to the DNA mismatch repair MutL/HexB family.

In terms of biological role, this protein is involved in the repair of mismatches in DNA. It is required for dam-dependent methyl-directed DNA mismatch repair. May act as a 'molecular matchmaker', a protein that promotes the formation of a stable complex between two or more DNA-binding proteins in an ATP-dependent manner without itself being part of a final effector complex. This chain is DNA mismatch repair protein MutL, found in Staphylococcus aureus (strain USA300).